Here is a 131-residue protein sequence, read N- to C-terminus: Proteinase inhibitor (131 aa).

Positions 1-26 (MSASAKLSRMVCLLCGFFSTGISMAS) are cleaved as a signal peptide. C51 and C74 form a disulfide bridge.

It belongs to the protease inhibitor I38 family.

Its subcellular location is the periplasm. Its function is as follows. Inhibitor of the alkaline protease. It forms a non-covalent bond with the protease and may prevent its autocatalytic cleavage in the periplasm. In Pseudomonas aeruginosa (strain ATCC 15692 / DSM 22644 / CIP 104116 / JCM 14847 / LMG 12228 / 1C / PRS 101 / PAO1), this protein is Proteinase inhibitor (inh).